The chain runs to 103 residues: NADH-quinone oxidoreductase subunit K (103 aa).

The next 3 helical transmembrane spans lie at 6 to 26 (LSHF…GIFL), 32 to 52 (LVLL…FVAF), and 63 to 83 (IFVF…LAIL).

Belongs to the complex I subunit 4L family. In terms of assembly, NDH-1 is composed of 14 different subunits. Subunits NuoA, H, J, K, L, M, N constitute the membrane sector of the complex.

The protein resides in the cell inner membrane. The catalysed reaction is a quinone + NADH + 5 H(+)(in) = a quinol + NAD(+) + 4 H(+)(out). Its function is as follows. NDH-1 shuttles electrons from NADH, via FMN and iron-sulfur (Fe-S) centers, to quinones in the respiratory chain. The immediate electron acceptor for the enzyme in this species is believed to be ubiquinone. Couples the redox reaction to proton translocation (for every two electrons transferred, four hydrogen ions are translocated across the cytoplasmic membrane), and thus conserves the redox energy in a proton gradient. The polypeptide is NADH-quinone oxidoreductase subunit K (Dechloromonas aromatica (strain RCB)).